Reading from the N-terminus, the 717-residue chain is Putative amino acid transporter AAT1 (717 aa).

Residues 1-10 are compositionally biased toward basic and acidic residues; that stretch reads MREGAFDASR. Residues 1 to 88 form a disordered region; sequence MREGAFDASR…DRAQTDSRQE (88 aa). Over residues 16–25 the composition is skewed to polar residues; the sequence is QRPSSLSTAQ. Positions 26-53 are enriched in low complexity; the sequence is PPSDSRPPSSSSPPSSSSSSSSASSSSP. The segment covering 74–88 has biased composition (basic and acidic residues); sequence SAEKMDRAQTDSRQE. 8 consecutive transmembrane segments (helical) span residues 124–143, 149–170, 196–216, 236–253, 265–283, 303–320, 341–358, and 378–402; these read VLTL…PYAM, LIGL…YILM, AVDA…LVFL, HRAA…PLSV, FFPV…YRSL, FKSF…INVC, AALL…LGYL, and LMHV…IPTV. Residues 462–602 are disordered; sequence GDAEYGGAEA…REEREEREGQ (141 aa). Residues 463–477 show a composition bias toward low complexity; that stretch reads DAEYGGAEAGEATRG. Over residues 497–519 the composition is skewed to basic and acidic residues; that stretch reads ARNRDRSRLHADSERSAGDREGS. Low complexity predominate over residues 547–558; the sequence is GSSSASSRSVDS. Residues 584-602 are compositionally biased toward basic and acidic residues; it reads SGDREAREEREEREEREGQ. 3 helical membrane passes run 622-638, 644-669, and 681-702; these read VCVA…ALVL, VVGL…YAGI, and LLMV…IIIL.

This sequence belongs to the amino acid/polyamine transporter 2 family.

Its subcellular location is the vacuole membrane. In terms of biological role, putative amino acid transporter. Probably transports arginine. Involved in maintaining the osmotic homeostasis of the digestive vacuole. Required for extracellular parasite survival and bradyzoite differentiation. This Toxoplasma gondii (strain ATCC 50611 / Me49) protein is Putative amino acid transporter AAT1.